We begin with the raw amino-acid sequence, 139 residues long: D-ribose pyranase (139 aa).

Catalysis depends on H20, which acts as the Proton donor. Residues D28, H106, and 128–130 (YAN) contribute to the substrate site.

It belongs to the RbsD / FucU family. RbsD subfamily. Homodecamer.

It localises to the cytoplasm. It catalyses the reaction beta-D-ribopyranose = beta-D-ribofuranose. It functions in the pathway carbohydrate metabolism; D-ribose degradation; D-ribose 5-phosphate from beta-D-ribopyranose: step 1/2. Its function is as follows. Catalyzes the interconversion of beta-pyran and beta-furan forms of D-ribose. This Salmonella typhi protein is D-ribose pyranase.